A 255-amino-acid polypeptide reads, in one-letter code: Octanoyltransferase (255 aa).

The interval 1-27 is disordered; that stretch reads MPPASDAHAAPDAAASTSASPQSCAAP. One can recognise a BPL/LPL catalytic domain in the interval 59 to 240; sequence PDTGDEIWVV…RLIANLDGAT (182 aa). Substrate contacts are provided by residues 99–106, 171–173, and 184–186; these read RGGQITYH, ALG, and GLS. The active-site Acyl-thioester intermediate is C202.

Belongs to the LipB family.

It is found in the cytoplasm. The catalysed reaction is octanoyl-[ACP] + L-lysyl-[protein] = N(6)-octanoyl-L-lysyl-[protein] + holo-[ACP] + H(+). It functions in the pathway protein modification; protein lipoylation via endogenous pathway; protein N(6)-(lipoyl)lysine from octanoyl-[acyl-carrier-protein]: step 1/2. Functionally, catalyzes the transfer of endogenously produced octanoic acid from octanoyl-acyl-carrier-protein onto the lipoyl domains of lipoate-dependent enzymes. Lipoyl-ACP can also act as a substrate although octanoyl-ACP is likely to be the physiological substrate. In Burkholderia thailandensis (strain ATCC 700388 / DSM 13276 / CCUG 48851 / CIP 106301 / E264), this protein is Octanoyltransferase.